Consider the following 1320-residue polypeptide: Sal-like protein 3 (1320 aa).

Basic residues predominate over residues 1–11; it reads MSRRKQAKPQH. The interval 1 to 49 is disordered; that stretch reads MSRRKQAKPQHLKSDEELPPQDGASEHGVPGDGAEDADSGSESRSGSEE. The span at 40–49 shows a compositional bias: low complexity; it reads GSESRSGSEE. The C2H2-type 1; atypical zinc-finger motif lies at 51–73; sequence SVCEKCCAEFFKWADFLQHKKTC. Disordered stretches follow at residues 84–166 and 271–367; these read DDEP…AFSM and LSAG…NLPN. Residues 88–100 show a composition bias toward pro residues; that stretch reads APPSEDFPEPSPA. Serine 109 is subject to Phosphoserine. Basic and acidic residues predominate over residues 121–131; that stretch reads SEVKAATKEAE. Residues 143 to 160 are compositionally biased toward pro residues; the sequence is PPGPSVPPPPPALPPQPE. The segment covering 271-289 has biased composition (low complexity); it reads LSAGPATASAGSGSTLPAA. Positions 295 to 311 are enriched in polar residues; it reads HLSQPASGTSTPCSTSA. 2 stretches are compositionally biased toward low complexity: residues 323–342 and 355–367; these read STGP…GNAV and PGPL…NLPN. 2 C2H2-type zinc fingers span residues 427 to 449 and 455 to 477; these read HKCR…LRSH and FKCN…FQRH. Positions 534 to 623 are disordered; that stretch reads GLQLPPTVPG…RTGDAPVVGG (90 aa). Polar residues predominate over residues 543 to 554; that stretch reads GTHNYTDSPSIT. Positions 555 to 568 are enriched in low complexity; the sequence is PVSRSPQRPSPASS. Polar residues predominate over residues 569–583; the sequence is ECTSLSPGLNNTESG. 3 C2H2-type zinc fingers span residues 692-714, 720-742, and 752-774; these read NQCV…YRTH, FKCK…FGVH, and HSCP…IRMH. Disordered regions lie at residues 807 to 846 and 878 to 972; these read SSFD…PPSP and VENG…GHPG. The segment covering 809-823 has biased composition (acidic residues); sequence FDDDIDENSMEEDSE. Low complexity-rich tracts occupy residues 834–846 and 902–923; these read PLLS…PPSP and RSAG…PAHS. Phosphoserine is present on serine 932. 4 consecutive C2H2-type zinc fingers follow at residues 997–1019, 1025–1047, 1133–1155, and 1161–1183; these read TVCG…YRSH, FVCT…LLTH, HNCQ…ERTH, and FGCT…MGTH. Residue serine 1197 is modified to Phosphoserine.

Belongs to the sal C2H2-type zinc-finger protein family. In adult brain, testis and kidney. In lower levels also in adult ovaries and embryonic stem cells. In embryo in developing neuroectoderm of brain, inner ear and spinal cord. Also weakly and transiently expressed in embryonic branchial arches, notochord, limb buds and heart.

It localises to the nucleus. In terms of biological role, probable transcription factor. The sequence is that of Sal-like protein 3 (Sall3) from Mus musculus (Mouse).